Here is an 88-residue protein sequence, read N- to C-terminus: UPF0495 protein DEHA2C16280g (88 aa).

A helical transmembrane segment spans residues 25–47 (YPLFAAMGVAVASGCFFTYRHFA).

It belongs to the UPF0495 family.

It localises to the membrane. The protein is UPF0495 protein DEHA2C16280g of Debaryomyces hansenii (strain ATCC 36239 / CBS 767 / BCRC 21394 / JCM 1990 / NBRC 0083 / IGC 2968) (Yeast).